The primary structure comprises 194 residues: uncharacterized protein (194 aa).

A disordered region spans residues 45–138; the sequence is QLLGVPEQHR…AGPPRGDWGV (94 aa). 2 positions are modified to phosphoserine: Ser-69 and Ser-76. Positions 97–106 are enriched in pro residues; it reads PPLPPPPVLP. The span at 107–116 shows a compositional bias: low complexity; sequence GPGEELPGAR. Residues 117 to 128 are compositionally biased toward gly residues; the sequence is LPGGGGDDGAGR.

This is an uncharacterized protein from Homo sapiens (Human).